The following is a 140-amino-acid chain: Large ribosomal subunit protein uL14 (140 aa).

It belongs to the universal ribosomal protein uL14 family. As to quaternary structure, part of the 50S ribosomal subunit. Forms a cluster with proteins L3 and L24e, part of which may contact the 16S rRNA in 2 intersubunit bridges.

Its function is as follows. Binds to 23S rRNA. Forms part of two intersubunit bridges in the 70S ribosome. This Aeropyrum pernix (strain ATCC 700893 / DSM 11879 / JCM 9820 / NBRC 100138 / K1) protein is Large ribosomal subunit protein uL14.